A 447-amino-acid polypeptide reads, in one-letter code: Phosphoglucosamine mutase (447 aa).

Residue serine 107 is the Phosphoserine intermediate of the active site. Residues serine 107, aspartate 246, aspartate 248, and aspartate 250 each contribute to the Mg(2+) site. Position 107 is a phosphoserine (serine 107).

It belongs to the phosphohexose mutase family. Mg(2+) is required as a cofactor. Activated by phosphorylation.

It catalyses the reaction alpha-D-glucosamine 1-phosphate = D-glucosamine 6-phosphate. In terms of biological role, catalyzes the conversion of glucosamine-6-phosphate to glucosamine-1-phosphate. This chain is Phosphoglucosamine mutase, found in Ralstonia pickettii (strain 12J).